A 404-amino-acid chain; its full sequence is S-adenosylmethionine synthase (404 aa).

H18 is an ATP binding site. Residue D20 participates in Mg(2+) binding. E46 is a binding site for K(+). Residues E59 and Q102 each contribute to the L-methionine site. The flexible loop stretch occupies residues 102 to 112 (QSPDIAQGVDT). Residues 177–179 (DGK), 249–250 (KF), D258, 264–265 (RK), A281, and K285 contribute to the ATP site. D258 is a binding site for L-methionine. K289 contributes to the L-methionine binding site.

The protein belongs to the AdoMet synthase family. Homotetramer; dimer of dimers. Mg(2+) serves as cofactor. The cofactor is K(+).

It is found in the cytoplasm. It carries out the reaction L-methionine + ATP + H2O = S-adenosyl-L-methionine + phosphate + diphosphate. Its pathway is amino-acid biosynthesis; S-adenosyl-L-methionine biosynthesis; S-adenosyl-L-methionine from L-methionine: step 1/1. Functionally, catalyzes the formation of S-adenosylmethionine (AdoMet) from methionine and ATP. The overall synthetic reaction is composed of two sequential steps, AdoMet formation and the subsequent tripolyphosphate hydrolysis which occurs prior to release of AdoMet from the enzyme. The protein is S-adenosylmethionine synthase of Nocardia farcinica (strain IFM 10152).